We begin with the raw amino-acid sequence, 556 residues long: Glucose-6-phosphate isomerase (556 aa).

The active-site Proton donor is glutamate 360. Catalysis depends on residues histidine 391 and lysine 519.

Belongs to the GPI family.

The protein localises to the cytoplasm. The enzyme catalyses alpha-D-glucose 6-phosphate = beta-D-fructose 6-phosphate. The protein operates within carbohydrate biosynthesis; gluconeogenesis. Its pathway is carbohydrate degradation; glycolysis; D-glyceraldehyde 3-phosphate and glycerone phosphate from D-glucose: step 2/4. Functionally, catalyzes the reversible isomerization of glucose-6-phosphate to fructose-6-phosphate. This Acinetobacter baumannii (strain AB0057) protein is Glucose-6-phosphate isomerase.